Consider the following 468-residue polypeptide: Probable ubiquitin carboxyl-terminal hydrolase R319 (468 aa).

One can recognise a USP domain in the interval 42-462 (TGIMNLGNTC…NAYILFYIRS (421 aa)). C51 functions as the Nucleophile in the catalytic mechanism. The active-site Proton acceptor is H420.

Belongs to the peptidase C19 family.

The enzyme catalyses Thiol-dependent hydrolysis of ester, thioester, amide, peptide and isopeptide bonds formed by the C-terminal Gly of ubiquitin (a 76-residue protein attached to proteins as an intracellular targeting signal).. The protein is Probable ubiquitin carboxyl-terminal hydrolase R319 of Acanthamoeba polyphaga (Amoeba).